The chain runs to 417 residues: MFSRDLTLARYDAELFAAMEQEAQRQEEHIELIASENYTSPAVMEAQGSVLTNKYAEGYPHKRYYGGCEYVDIVEQLAIDRAKQLFGADYANVQPHAGSQANAAVYLALLSAGDTILGMSLAHGGHLTHGASVSSSGKLYNAVQYGIDANGLIDYDEVERLAVEHKPKMIVAGFSAYSQVLDFARFRAIADKVGAYLFVDMAHVAGLVAAGVYPNPVPFADVVTTTTHKTLRGPRGGLILARANEEIEKKLNSAVFPSAQGGPLEHVIAAKAVCFKEALQPEFKTYQQQVLKNAQSMAQVFLDRGFDVVSGGTQNHLFLLSLIKQDITGKDADAALGRAFITVNKNSVPNDPRSPFVTSGLRIGTPAVTTRGFKEAECRELAGWICDILENMGDESVVDGVREKVKAICAKFPVYGN.

(6S)-5,6,7,8-tetrahydrofolate is bound by residues leucine 121 and 125-127 (GHL). Lysine 229 is subject to N6-(pyridoxal phosphate)lysine. 354–356 (SPF) is a (6S)-5,6,7,8-tetrahydrofolate binding site.

This sequence belongs to the SHMT family. As to quaternary structure, homodimer. Pyridoxal 5'-phosphate is required as a cofactor.

It localises to the cytoplasm. It carries out the reaction (6R)-5,10-methylene-5,6,7,8-tetrahydrofolate + glycine + H2O = (6S)-5,6,7,8-tetrahydrofolate + L-serine. It functions in the pathway one-carbon metabolism; tetrahydrofolate interconversion. Its pathway is amino-acid biosynthesis; glycine biosynthesis; glycine from L-serine: step 1/1. Catalyzes the reversible interconversion of serine and glycine with tetrahydrofolate (THF) serving as the one-carbon carrier. This reaction serves as the major source of one-carbon groups required for the biosynthesis of purines, thymidylate, methionine, and other important biomolecules. Also exhibits THF-independent aldolase activity toward beta-hydroxyamino acids, producing glycine and aldehydes, via a retro-aldol mechanism. The chain is Serine hydroxymethyltransferase 3 from Pseudomonas aeruginosa (strain ATCC 15692 / DSM 22644 / CIP 104116 / JCM 14847 / LMG 12228 / 1C / PRS 101 / PAO1).